The sequence spans 432 residues: Gamma-glutamyl phosphate reductase (432 aa).

Belongs to the gamma-glutamyl phosphate reductase family.

The protein localises to the cytoplasm. The catalysed reaction is L-glutamate 5-semialdehyde + phosphate + NADP(+) = L-glutamyl 5-phosphate + NADPH + H(+). The protein operates within amino-acid biosynthesis; L-proline biosynthesis; L-glutamate 5-semialdehyde from L-glutamate: step 2/2. Functionally, catalyzes the NADPH-dependent reduction of L-glutamate 5-phosphate into L-glutamate 5-semialdehyde and phosphate. The product spontaneously undergoes cyclization to form 1-pyrroline-5-carboxylate. In Methylorubrum extorquens (strain PA1) (Methylobacterium extorquens), this protein is Gamma-glutamyl phosphate reductase.